Reading from the N-terminus, the 499-residue chain is Cytochrome P450 81Q32 (499 aa).

Residues 5 to 25 (TLLYTFLAVVLLSISLKLFPV) traverse the membrane as a helical segment. N-linked (GlcNAc...) asparagine glycans are attached at residues N112, N183, and N266. Residue C434 participates in heme binding.

This sequence belongs to the cytochrome P450 family. As to expression, expressed in leaf epidermis and in the leaf internal phloem-associated parenchyma (IPAP) inside the mesophyll.

The protein localises to the membrane. The chain is Cytochrome P450 81Q32 from Catharanthus roseus (Madagascar periwinkle).